The chain runs to 418 residues: METHISCLFPELLAMIFGYLDVRDKGRAAQVCTAWRDAAYHKSVWRGVEAKLHLRRANPSLFPSLQARGIRRVQILSLRRSLSYVIQGMANIESLNLSGCYNLTDNGLGHAFVQEIGSLRALNLSLCKQITDSSLGRIAQYLKGLEVLELGGCSNITNTGLLLIAWGLQRLKSLNLRSCRHLSDVGIGHLAGMTRSAAEGCLGLEQLTLQDCQKLTDLSLKHISRGLTGLRLLNLSFCGGISDAGLLHLSHMGSLRSLNLRSCDNISDTGIMHLAMGSLRLSGLDVSFCDKVGDQSLAYIAQGLDGLKSLSLCSCHISDDGINRMVRQMHGLRTLNIGQCVRITDKGLELIAEHLSQLTGIDLYGCTRITKRGLERITQLPCLKVLNLGLWQMTDSEKEARGDFSPLFTVRTRGSSRR.

Positions 2–48 (ETHISCLFPELLAMIFGYLDVRDKGRAAQVCTAWRDAAYHKSVWRGV) constitute an F-box domain. Residues 2–48 (ETHISCLFPELLAMIFGYLDVRDKGRAAQVCTAWRDAAYHKSVWRGV) are required for down-regulation of SNAI1. LRR repeat units follow at residues 144–163 (GLEVLELGGCSNITNTGLLL), 170–191 (RLKSLNLRSCRHLSDVGIGHLA), 203–225 (GLEQLTLQDCQKLTDLSLKHISR), 229–250 (GLRLLNLSFCGGISDAGLLHLS), and 254–275 (SLRSLNLRSCDNISDTGIMHLA).

As to quaternary structure, part of a SCF (SKP1-cullin-F-box) ubiquitin-protein ligase complex. Interacts with SKP1 and CUL1. Interacts with SNAI1; the interaction requires the phosphorylation of the two serine residues in the substrate destruction motif D-S-G-X(2,3,4)-S.

It is found in the cytoplasm. Functionally, substrate-recognition component of some SCF (SKP1-CUL1-F-box protein)-type E3 ubiquitin-protein ligase complexes. The SCF(FBXL14) complex acts by mediating ubiquitination and subsequent degradation of SNAI1. The protein is F-box/LRR-repeat protein 14 (FBXL14) of Homo sapiens (Human).